We begin with the raw amino-acid sequence, 79 residues long: Cytochrome b (79 aa).

Transmembrane regions (helical) follow at residues 1 to 7 (SALFLAM), 31 to 52 (WLIR…YLHI), and 67 to 79 (WNIG…LTMA). Residues His-37 and His-51 each contribute to the heme b site.

This sequence belongs to the cytochrome b family. As to quaternary structure, the cytochrome bc1 complex contains 11 subunits: 3 respiratory subunits (MT-CYB, CYC1 and UQCRFS1), 2 core proteins (UQCRC1 and UQCRC2) and 6 low-molecular weight proteins (UQCRH/QCR6, UQCRB/QCR7, UQCRQ/QCR8, UQCR10/QCR9, UQCR11/QCR10 and a cleavage product of UQCRFS1). This cytochrome bc1 complex then forms a dimer. The cofactor is heme b.

The protein localises to the mitochondrion inner membrane. Component of the ubiquinol-cytochrome c reductase complex (complex III or cytochrome b-c1 complex) that is part of the mitochondrial respiratory chain. The b-c1 complex mediates electron transfer from ubiquinol to cytochrome c. Contributes to the generation of a proton gradient across the mitochondrial membrane that is then used for ATP synthesis. This chain is Cytochrome b (MT-CYB), found in Dipodomys heermanni (Heermann's kangaroo rat).